The following is a 199-amino-acid chain: Superoxide dismutase [Mn] 2 (199 aa).

Positions 28, 75, 157, and 161 each coordinate Mn(2+).

Belongs to the iron/manganese superoxide dismutase family. Mn(2+) serves as cofactor.

The enzyme catalyses 2 superoxide + 2 H(+) = H2O2 + O2. Functionally, destroys superoxide anion radicals which are normally produced within the cells and which are toxic to biological systems. The chain is Superoxide dismutase [Mn] 2 (sod2) from Haloferax volcanii (strain ATCC 29605 / DSM 3757 / JCM 8879 / NBRC 14742 / NCIMB 2012 / VKM B-1768 / DS2) (Halobacterium volcanii).